Reading from the N-terminus, the 1405-residue chain is DNA-directed RNA polymerase subunit beta' (1405 aa).

4 residues coordinate Zn(2+): cysteine 71, cysteine 73, cysteine 86, and cysteine 89. Residues aspartate 462, aspartate 464, and aspartate 466 each contribute to the Mg(2+) site. Zn(2+)-binding residues include cysteine 810, cysteine 884, cysteine 891, and cysteine 894.

It belongs to the RNA polymerase beta' chain family. The RNAP catalytic core consists of 2 alpha, 1 beta, 1 beta' and 1 omega subunit. When a sigma factor is associated with the core the holoenzyme is formed, which can initiate transcription. The cofactor is Mg(2+). It depends on Zn(2+) as a cofactor.

The enzyme catalyses RNA(n) + a ribonucleoside 5'-triphosphate = RNA(n+1) + diphosphate. DNA-dependent RNA polymerase catalyzes the transcription of DNA into RNA using the four ribonucleoside triphosphates as substrates. In Maricaulis maris (strain MCS10) (Caulobacter maris), this protein is DNA-directed RNA polymerase subunit beta'.